Here is a 288-residue protein sequence, read N- to C-terminus: Bifunctional protein FolD (288 aa).

NADP(+)-binding positions include 166-168, Ser191, and Ile232; that span reads GRS.

The protein belongs to the tetrahydrofolate dehydrogenase/cyclohydrolase family. As to quaternary structure, homodimer.

The enzyme catalyses (6R)-5,10-methylene-5,6,7,8-tetrahydrofolate + NADP(+) = (6R)-5,10-methenyltetrahydrofolate + NADPH. The catalysed reaction is (6R)-5,10-methenyltetrahydrofolate + H2O = (6R)-10-formyltetrahydrofolate + H(+). It functions in the pathway one-carbon metabolism; tetrahydrofolate interconversion. In terms of biological role, catalyzes the oxidation of 5,10-methylenetetrahydrofolate to 5,10-methenyltetrahydrofolate and then the hydrolysis of 5,10-methenyltetrahydrofolate to 10-formyltetrahydrofolate. The chain is Bifunctional protein FolD from Rickettsia canadensis (strain McKiel).